A 594-amino-acid polypeptide reads, in one-letter code: Choline dehydrogenase, mitochondrial (594 aa).

The N-terminal 29 residues, 1–29 (MWCLLRGLGRPGALARGALGQQQSLGARA), are a transit peptide targeting the mitochondrion. 42-71 (SYVVVGAGSAGCVLAGRLTEDPAERVLLLE) is an FAD binding site. Position 436 is an N6-succinyllysine (Lys-436). Lys-484 and Lys-496 each carry N6-acetyllysine; alternate. N6-succinyllysine; alternate is present on residues Lys-484 and Lys-496. The Proton acceptor role is filled by His-511. Lys-580 is modified (N6-acetyllysine).

The protein belongs to the GMC oxidoreductase family. The cofactor is FAD.

The protein resides in the mitochondrion inner membrane. The enzyme catalyses choline + A = betaine aldehyde + AH2. The protein operates within amine and polyamine biosynthesis; betaine biosynthesis via choline pathway; betaine aldehyde from choline (cytochrome c reductase route): step 1/1. This is Choline dehydrogenase, mitochondrial (CHDH) from Homo sapiens (Human).